The sequence spans 551 residues: Cytosolic Fe-S cluster assembly factor NAR1 (551 aa).

[4Fe-4S] cluster is bound by residues Cys20, Cys57, Cys60, Cys63, Cys178, and Cys242. The tract at residues 395 to 435 (DPSGHKKRSVRRVAALRSRGRKDSSSEDSTGTPSAISNALG) is disordered. Over residues 421-431 (EDSTGTPSAIS) the composition is skewed to polar residues. Cys451 contributes to the [4Fe-4S] cluster binding site.

The protein belongs to the NARF family.

Its function is as follows. Component of the cytosolic Fe/S protein assembly machinery. Required for maturation of extramitochondrial Fe/S proteins. May play a role in the transfer of pre-assembled Fe/S clusters to target apoproteins. In Candida glabrata (strain ATCC 2001 / BCRC 20586 / JCM 3761 / NBRC 0622 / NRRL Y-65 / CBS 138) (Yeast), this protein is Cytosolic Fe-S cluster assembly factor NAR1 (NAR1).